The chain runs to 240 residues: PF03932 family protein CutC (240 aa).

Belongs to the CutC family.

It localises to the cytoplasm. This chain is PF03932 family protein CutC, found in Xanthomonas campestris pv. campestris (strain B100).